Here is a 355-residue protein sequence, read N- to C-terminus: cGAMP-activated phospholipase (355 aa).

The region spanning 17-214 is the PNPLA domain; that stretch reads LSLNGGGARG…VANNPSFIGL (198 aa). The short motif at 21–26 is the GXGXXG element; that stretch reads GGGARG. Residues 60–64 carry the GXSXG motif; it reads GTSIG. S62 serves as the catalytic Nucleophile. Catalysis depends on D201, which acts as the Proton acceptor. Residues 201 to 203 carry the DGA/G motif; sequence DGG.

It belongs to the patatin family.

It carries out the reaction a 1,2-diacyl-sn-glycero-3-phosphocholine + H2O = a 2-acyl-sn-glycero-3-phosphocholine + a fatty acid + H(+). The catalysed reaction is 1,2-di-(9Z-octadecenoyl)-sn-glycero-3-phosphoethanolamine + 2 H2O = sn-glycero-3-phosphoethanolamine + 2 (9Z)-octadecenoate + 2 H(+). Its activity is regulated as follows. Phospholipase activity is specifically activated upon 3',3'-cGAMP (cGAMP) binding. Is not activated by the other cyclic dinucleotides 3',3'-cUAMP, 3',3'-c-diAMP and 3',3'-c-diGMP. Therefore, is specifically activated by only the nucleotide synthesized from its adjacently encoded nucleotidyltransferase (DncV). The cGAMP-activation of lipase is inhibited by T4 phage protein Acb2 (Vs.4). In terms of biological role, effector phospholipase of a CBASS antiviral system. CBASS (cyclic oligonucleotide-based antiphage signaling system) provides immunity against bacteriophages. The CD-NTase protein (DncV) synthesizes cyclic nucleotides in response to infection; these serve as specific second messenger signals. The signals activate a diverse range of effectors, leading to bacterial cell death and thus abortive phage infection. A type II-A(GA) CBASS system. Functionally, phospholipase that is activated upon binding to the cyclic dinucleotide (CDN) second messenger 3',3'-cyclic GMP-AMP (3',3'-cGAMP). Then degrades phosphatidylethanolamine (PE) and phosphatidylglycerol (PG), the major phospholipids in the cell membrane of V.cholerae, releasing 16:1 and 18:1 free fatty acids. Upon expression in E.coli with cognate DncV, the cell inner membrane shrinks and separates from the cell wall. Its function is as follows. Protects E.coli against phage infection. When the CBASS operon (capV-dncV-cap2-cap3) is introduced in E.coli MG1655 there is about 100-fold protection against phages P1 and T2. When the operon is introduced in E.coli MG1655 there is a more than 10(3) decrease in the efficiency of T2 plaque formation. Protects 100-fold against phage T5, offers no protection against T7. When the operon is introduced in E.coli MG1655 it protects against phages T2, T4, T5 and T6. Another paper shows the operon confers protection against phages P1, T2, T5 and T6 but not T4 or lambda. This Vibrio cholerae serotype O1 (strain ATCC 39315 / El Tor Inaba N16961) protein is cGAMP-activated phospholipase.